The following is a 647-amino-acid chain: Shugoshin-2 (647 aa).

Ser7 bears the Phosphoserine mark. Coiled-coil stretches lie at residues 28 to 87 and 125 to 145; these read SKAQ…FHEE and DEESVVKDTEEIIEQAQHDVS. A disordered region spans residues 171 to 295; that stretch reads REANVFSDTQ…DTVIQSTPTK (125 aa). Residues 200–210 are compositionally biased toward low complexity; the sequence is NLSNSKPVNNN. Ser240 carries the post-translational modification Phosphoserine. 2 stretches are compositionally biased toward polar residues: residues 242–253 and 282–293; these read KSLSNKINNQAA and RIQSDTVIQSTP. The residue at position 292 (Thr292) is a Phosphothreonine. Phosphoserine occurs at positions 332 and 335. Polar residues-rich tracts occupy residues 375–396 and 462–478; these read SLTSQENVGPQVTTTSLSNMTV and EPPSSNGFSIAHPNNSP. 4 disordered regions span residues 375–416, 453–486, 522–579, and 593–647; these read SLTS…DSSV, RNPPMRLSSEPPSSNGFSIAHPNNSPLRPPSLQG, TNLK…ERKK, and RNFD…TLNL. Basic and acidic residues-rich tracts occupy residues 528-541 and 593-602; these read NENDRVTKTQSRRE and RNFDLPSDHV. The segment covering 621–647 has biased composition (polar residues); that stretch reads KTETANITSEAPTTSEVTLENSETLNL.

The protein belongs to the shugoshin family.

It is found in the chromosome. It localises to the centromere. Involved in chromosome cohesion during mitosis and meiosis by preventing premature dissociation of cohesin complex from centromeres after prophase, when most of cohesin complex dissociates from chromosomes arms. Required for faithful mitotic chromosome segregation and proper kinetochore orientation during meiosis I. In contrast to sgo1, it is dispensable for centromeric protection of rec8 during meiosis I as well as protection of rad21 during mitosis. Required to sense the lack of tension at centromeres during mitosis. The sequence is that of Shugoshin-2 (sgo2) from Schizosaccharomyces pombe (strain 972 / ATCC 24843) (Fission yeast).